Here is a 404-residue protein sequence, read N- to C-terminus: Cytochrome b561 and DOMON domain-containing protein At2g04850 (404 aa).

Positions 1-22 (MATLILSFLLLLLATKLPESLA) are cleaved as a signal peptide. Residues 43–173 (QQASIAWTYH…TKIHHVWNRG (131 aa)) form the DOMON domain. One can recognise a Cytochrome b561 domain in the interval 180 to 380 (SPTIHPTTST…MEVNSWVVFC (201 aa)). A helical transmembrane segment spans residues 217–237 (VTHGVVNAISWGFLLPAGAVT). Residues histidine 219 and histidine 255 each coordinate heme b. Residues 256 to 276 (AAIQLTGFLLGTIGFSIGIVL) traverse the membrane as a helical segment. A heme b-binding site is contributed by histidine 288. A helical membrane pass occupies residues 290–310 (SLGIATFTAAALQTLALLFRP). Residue histidine 324 coordinates heme b. 2 helical membrane-spanning segments follow: residues 326–346 (FVGY…FEVL) and 359–379 (LCLS…WVVF).

Requires heme b as cofactor.

It is found in the membrane. Functionally, may act as a catecholamine-responsive trans-membrane electron transporter. The polypeptide is Cytochrome b561 and DOMON domain-containing protein At2g04850 (Arabidopsis thaliana (Mouse-ear cress)).